Here is a 302-residue protein sequence, read N- to C-terminus: Probable lipid kinase YegS-like (302 aa).

The 129-residue stretch at 1–129 folds into the DAGKc domain; the sequence is MDKDKVLLVL…IDLGEVNGKL (129 aa). ATP-binding positions include T39, 65–71, and T92; that span reads GDGTLRE. Mg(2+) is bound by residues R210, D213, and L215. E268 acts as the Proton acceptor in catalysis.

The protein belongs to the diacylglycerol/lipid kinase family. YegS lipid kinase subfamily. Requires Mg(2+) as cofactor. The cofactor is Ca(2+).

The protein resides in the cytoplasm. Its function is as follows. Probably phosphorylates lipids; the in vivo substrate is unknown. This Pseudomonas aeruginosa (strain ATCC 15692 / DSM 22644 / CIP 104116 / JCM 14847 / LMG 12228 / 1C / PRS 101 / PAO1) protein is Probable lipid kinase YegS-like.